The chain runs to 512 residues: Cytochrome P450 monooxygenase astD (512 aa).

A helical transmembrane segment spans residues 19–39 (MGISILVMLSTFLALGTIFVY). N-linked (GlcNAc...) asparagine glycosylation is found at asparagine 191 and asparagine 413. Cysteine 449 contributes to the heme binding site.

Belongs to the cytochrome P450 family. Requires heme as cofactor.

The protein localises to the membrane. It functions in the pathway secondary metabolite biosynthesis; terpenoid biosynthesis. In terms of biological role, cytochrome P450 monooxygenase; part of the gene cluster that mediates the biosynthesis of astellolides, drimane-type sesquiterpene esters that show antimicrobial, anti-inflammatory, and anti-tumor activities. The first step in astellolide biosynthesis is performed by the sesquiterpene cyclase astC that catalyzes the formation of drimanyl pyrophosphate from farnesyl pyrophosphate. Drimanyl pyrophosphate is then dephosphorylated by the sesquiterpene phosphatase astI to produce drimanyl monophosphate which is further dephosphorylated to drim-8-ene-11-ol by atsK. Drim-8-ene-11-ol is converted to confertifolin, probably by the cytochrome P450 monooxygenase astD and/or the dehydrogenase astE. The cytochrome P450 monooxygenases astB, astF and astJ then hydroxylate confertifolin at C6, C14, or C15 to form trihydroxy confertifolin. The nonribosomal peptide synthetase astA catalyzes ester bond formation between trihydroxy contifolin and benzoic acid (BA) or 4-hydroxy benzoic acid (4HBA), leading to the formation of dideacetyl astellolides A and B, respectively. Finally, the O-acetyltransferase astG converts dideacetyl astellolides A and B into deacetyl astellolides A and B. The polypeptide is Cytochrome P450 monooxygenase astD (Aspergillus oryzae (strain ATCC 42149 / RIB 40) (Yellow koji mold)).